Reading from the N-terminus, the 97-residue chain is Small ribosomal subunit protein bS6 (97 aa).

It belongs to the bacterial ribosomal protein bS6 family.

Its function is as follows. Binds together with bS18 to 16S ribosomal RNA. The polypeptide is Small ribosomal subunit protein bS6 (Limosilactobacillus fermentum (strain NBRC 3956 / LMG 18251) (Lactobacillus fermentum)).